Reading from the N-terminus, the 244-residue chain is Mediator of RNA polymerase II transcription subunit 19 (244 aa).

Disordered regions lie at residues methionine 1–aspartate 56 and proline 171–arginine 244. The span at glycine 26–threonine 47 shows a compositional bias: pro residues. The span at proline 171–serine 182 shows a compositional bias: basic residues. Serine 194 is subject to Phosphoserine. The segment covering lysine 212–arginine 224 has biased composition (basic residues). Residue serine 226 is modified to Phosphoserine. Residues serine 234 to arginine 244 are compositionally biased toward low complexity.

Belongs to the Mediator complex subunit 19 family. In terms of assembly, component of the Mediator complex, which is composed of MED1, MED4, MED6, MED7, MED8, MED9, MED10, MED11, MED12, MED13, MED13L, MED14, MED15, MED16, MED17, MED18, MED19, MED20, MED21, MED22, MED23, MED24, MED25, MED26, MED27, MED29, MED30, MED31, CCNC, CDK8 and CDC2L6/CDK11. The MED12, MED13, CCNC and CDK8 subunits form a distinct module termed the CDK8 module. Mediator containing the CDK8 module is less active than Mediator lacking this module in supporting transcriptional activation. Individual preparations of the Mediator complex lacking one or more distinct subunits have been variously termed ARC, CRSP, DRIP, PC2, SMCC and TRAP.

It localises to the nucleus. Functionally, component of the Mediator complex, a coactivator involved in the regulated transcription of nearly all RNA polymerase II-dependent genes. Mediator functions as a bridge to convey information from gene-specific regulatory proteins to the basal RNA polymerase II transcription machinery. Mediator is recruited to promoters by direct interactions with regulatory proteins and serves as a scaffold for the assembly of a functional preinitiation complex with RNA polymerase II and the general transcription factors. The chain is Mediator of RNA polymerase II transcription subunit 19 (MED19) from Homo sapiens (Human).